Consider the following 328-residue polypeptide: Twinfilin (328 aa).

In terms of domain architecture, ADF-H 1 spans 1-137; that stretch reads MSASVELKPT…DYQQIMKSLS (137 aa). S143 carries the post-translational modification Phosphoserine. Residues 173-304 enclose the ADF-H 2 domain; sequence GVAMSIDDKA…TEKEILHAAG (132 aa). Residues 302–328 are disordered; it reads AAGISSPQAETSTTKTGFSRPRPPRRR. A compositionally biased stretch (polar residues) spans 306–318; sequence SSPQAETSTTKTG.

This sequence belongs to the actin-binding proteins ADF family. Twinfilin subfamily. Interacts with G-actin; ADP-actin form.

It is found in the cytoplasm. It localises to the cytoskeleton. Functionally, actin-binding protein involved in motile and morphological processes. Inhibits actin polymerization, likely by sequestering G-actin. Prevents actin filament assembly by forming a 1:1 complex with actin monomers, and inhibits the nucleotide exchange reaction of actin monomers. The chain is Twinfilin (twf1) from Schizosaccharomyces pombe (strain 972 / ATCC 24843) (Fission yeast).